We begin with the raw amino-acid sequence, 256 residues long: Sorbitol dehydrogenase (256 aa).

NAD(+) contacts are provided by residues 15-17 (RGI), D36, 59-60 (DV), N86, Y152, K156, and 182-187 (PGVVDG). Y152 (proton acceptor) is an active-site residue.

This sequence belongs to the short-chain dehydrogenases/reductases (SDR) family. In terms of assembly, homodimer. May function as a tetramer in vivo.

The catalysed reaction is keto-D-fructose + NADH + H(+) = D-sorbitol + NAD(+). It carries out the reaction galactitol + NAD(+) = keto-D-tagatose + NADH + H(+). It catalyses the reaction L-iditol + NAD(+) = keto-L-sorbose + NADH + H(+). Its activity is regulated as follows. Inhibited by DTT, N-bromosuccinimide and iodoacetic acid. Functionally, catalyzes the oxidation of D-sorbitol (D-glucitol) to D-fructose. Can also catalyze the oxidation of galactitol to D-tagatose and the oxidation of L-iditol, with lower efficiency. In Cereibacter sphaeroides (Rhodobacter sphaeroides), this protein is Sorbitol dehydrogenase (polS).